A 199-amino-acid chain; its full sequence is dITP/XTP pyrophosphatase (199 aa).

7–12 (TTNLHK) serves as a coordination point for substrate. Mg(2+)-binding residues include Glu41 and Asp70. Asp70 (proton acceptor) is an active-site residue. Residues Ser71, 154-157 (FGYD), Lys177, and 182-183 (HR) each bind substrate.

Belongs to the HAM1 NTPase family. In terms of assembly, homodimer. It depends on Mg(2+) as a cofactor.

The catalysed reaction is XTP + H2O = XMP + diphosphate + H(+). The enzyme catalyses dITP + H2O = dIMP + diphosphate + H(+). It catalyses the reaction ITP + H2O = IMP + diphosphate + H(+). Pyrophosphatase that catalyzes the hydrolysis of nucleoside triphosphates to their monophosphate derivatives, with a high preference for the non-canonical purine nucleotides XTP (xanthosine triphosphate), dITP (deoxyinosine triphosphate) and ITP. Seems to function as a house-cleaning enzyme that removes non-canonical purine nucleotides from the nucleotide pool, thus preventing their incorporation into DNA/RNA and avoiding chromosomal lesions. In Protochlamydia amoebophila (strain UWE25), this protein is dITP/XTP pyrophosphatase.